The sequence spans 107 residues: Ferredoxin CarAc (107 aa).

One can recognise a Rieske domain in the interval 6–102 (LKVCAASDMQ…VEVKEGEVYV (97 aa)). [2Fe-2S] cluster is bound by residues Cys-46, His-48, Cys-65, and His-68.

Monomer. Carbazole 1,9a-dioxygenase complex consists of a terminal oxygenase component CarAa, a ferredoxin reductase component CarAd and a ferredoxin component CarAc. It depends on [2Fe-2S] cluster as a cofactor.

Part of the multicomponent carbazole 1,9a-dioxygenase (CARDO), that converts carbazole (CAR) into 2-aminobiphenyl-2,3-diol. Acts as a mediator in the electron transfer from CarAd to CarAa. The polypeptide is Ferredoxin CarAc (carAc) (Metapseudomonas resinovorans (Pseudomonas resinovorans)).